The chain runs to 257 residues: Deoxyribose-phosphate aldolase (257 aa).

The active-site Proton donor/acceptor is the Asp-102. The active-site Schiff-base intermediate with acetaldehyde is Lys-166. The active-site Proton donor/acceptor is Lys-198.

It belongs to the DeoC/FbaB aldolase family. DeoC type 2 subfamily.

It localises to the cytoplasm. It carries out the reaction 2-deoxy-D-ribose 5-phosphate = D-glyceraldehyde 3-phosphate + acetaldehyde. Its pathway is carbohydrate degradation; 2-deoxy-D-ribose 1-phosphate degradation; D-glyceraldehyde 3-phosphate and acetaldehyde from 2-deoxy-alpha-D-ribose 1-phosphate: step 2/2. Its function is as follows. Catalyzes a reversible aldol reaction between acetaldehyde and D-glyceraldehyde 3-phosphate to generate 2-deoxy-D-ribose 5-phosphate. This is Deoxyribose-phosphate aldolase from Aeromonas hydrophila subsp. hydrophila (strain ATCC 7966 / DSM 30187 / BCRC 13018 / CCUG 14551 / JCM 1027 / KCTC 2358 / NCIMB 9240 / NCTC 8049).